Consider the following 99-residue polypeptide: UPF0213 protein SP_1535 (99 aa).

Positions 3–78 constitute a GIY-YIG domain; that stretch reads HKAYMYVLEC…KRKKRPQKEE (76 aa).

Belongs to the UPF0213 family.

This is UPF0213 protein SP_1535 from Streptococcus pneumoniae serotype 4 (strain ATCC BAA-334 / TIGR4).